A 201-amino-acid chain; its full sequence is Potassium-transporting ATPase KdpC subunit (201 aa).

Residues 17 to 37 (LLTGLAYPLAMTGLAGILFPV) form a helical membrane-spanning segment.

Belongs to the KdpC family. The system is composed of three essential subunits: KdpA, KdpB and KdpC.

The protein resides in the cell inner membrane. In terms of biological role, part of the high-affinity ATP-driven potassium transport (or Kdp) system, which catalyzes the hydrolysis of ATP coupled with the electrogenic transport of potassium into the cytoplasm. This subunit acts as a catalytic chaperone that increases the ATP-binding affinity of the ATP-hydrolyzing subunit KdpB by the formation of a transient KdpB/KdpC/ATP ternary complex. This is Potassium-transporting ATPase KdpC subunit from Methylobacterium nodulans (strain LMG 21967 / CNCM I-2342 / ORS 2060).